The primary structure comprises 515 residues: Protein NRT1/ PTR FAMILY 4.1 (515 aa).

A run of 12 helical transmembrane segments spans residues G24–A44, F71–T91, F93–Q113, V134–P154, L168–V188, F204–M224, F298–M318, I339–Y359, I381–K401, I413–V433, A461–L481, and L492–A512.

Belongs to the major facilitator superfamily. Proton-dependent oligopeptide transporter (POT/PTR) (TC 2.A.17) family. Expressed in siliques and flowers.

It is found in the membrane. Functionally, involved in (+) and (-)-abscisic acid transport (ABA) and in gibberellin import. The sequence is that of Protein NRT1/ PTR FAMILY 4.1 (NPF4.1) from Arabidopsis thaliana (Mouse-ear cress).